We begin with the raw amino-acid sequence, 105 residues long: Spermatogenesis-associated protein 8 (105 aa).

In terms of tissue distribution, expressed at high levels in adult testis, at moderate levels in sperm and at low levels in fetal testis. Not detected in other tissues.

This Homo sapiens (Human) protein is Spermatogenesis-associated protein 8 (SPATA8).